A 60-amino-acid chain; its full sequence is UPF0434 protein Ssed_2824 (60 aa).

It belongs to the UPF0434 family.

The protein is UPF0434 protein Ssed_2824 of Shewanella sediminis (strain HAW-EB3).